A 204-amino-acid polypeptide reads, in one-letter code: Pyridoxal 5'-phosphate synthase subunit PdxT (204 aa).

52-54 lines the L-glutamine pocket; it reads GES. The active-site Nucleophile is the Cys84. L-glutamine-binding positions include Arg116 and 143 to 144; that span reads IR. Active-site charge relay system residues include His184 and Glu186.

It belongs to the glutaminase PdxT/SNO family. In terms of assembly, in the presence of PdxS, forms a dodecamer of heterodimers. Only shows activity in the heterodimer.

The enzyme catalyses aldehydo-D-ribose 5-phosphate + D-glyceraldehyde 3-phosphate + L-glutamine = pyridoxal 5'-phosphate + L-glutamate + phosphate + 3 H2O + H(+). It carries out the reaction L-glutamine + H2O = L-glutamate + NH4(+). It functions in the pathway cofactor biosynthesis; pyridoxal 5'-phosphate biosynthesis. In terms of biological role, catalyzes the hydrolysis of glutamine to glutamate and ammonia as part of the biosynthesis of pyridoxal 5'-phosphate. The resulting ammonia molecule is channeled to the active site of PdxS. This is Pyridoxal 5'-phosphate synthase subunit PdxT from Pyrobaculum arsenaticum (strain DSM 13514 / JCM 11321 / PZ6).